The following is a 217-amino-acid chain: ATP-dependent Clp protease proteolytic subunit 2 (217 aa).

The Nucleophile role is filled by serine 121. Histidine 146 is a catalytic residue.

This sequence belongs to the peptidase S14 family. Fourteen ClpP subunits assemble into 2 heptameric rings which stack back to back to give a disk-like structure with a central cavity, resembling the structure of eukaryotic proteasomes.

The protein localises to the cytoplasm. It catalyses the reaction Hydrolysis of proteins to small peptides in the presence of ATP and magnesium. alpha-casein is the usual test substrate. In the absence of ATP, only oligopeptides shorter than five residues are hydrolyzed (such as succinyl-Leu-Tyr-|-NHMec, and Leu-Tyr-Leu-|-Tyr-Trp, in which cleavage of the -Tyr-|-Leu- and -Tyr-|-Trp bonds also occurs).. Functionally, cleaves peptides in various proteins in a process that requires ATP hydrolysis. Has a chymotrypsin-like activity. Plays a major role in the degradation of misfolded proteins. In Paraburkholderia xenovorans (strain LB400), this protein is ATP-dependent Clp protease proteolytic subunit 2.